The primary structure comprises 467 residues: Ribosomal RNA small subunit methyltransferase F (467 aa).

Residues 119–125 (ASAPGSK), glutamate 143, aspartate 170, and aspartate 188 contribute to the S-adenosyl-L-methionine site. The active-site Nucleophile is cysteine 241.

The protein belongs to the class I-like SAM-binding methyltransferase superfamily. RsmB/NOP family.

The protein localises to the cytoplasm. It carries out the reaction cytidine(1407) in 16S rRNA + S-adenosyl-L-methionine = 5-methylcytidine(1407) in 16S rRNA + S-adenosyl-L-homocysteine + H(+). Its function is as follows. Specifically methylates the cytosine at position 1407 (m5C1407) of 16S rRNA. The polypeptide is Ribosomal RNA small subunit methyltransferase F (Shewanella amazonensis (strain ATCC BAA-1098 / SB2B)).